The primary structure comprises 64 residues: Metallothionein-like protein 1 (64 aa).

This sequence belongs to the metallothionein superfamily. Type 15 family.

Metallothioneins have a high content of cysteine residues that bind various heavy metals. The polypeptide is Metallothionein-like protein 1 (MT1) (Prunus avium (Cherry)).